The sequence spans 361 residues: MAGNTIGQLFRVTTFGESHGLALGCIVDGVPPGIPLTEADLQHDLDRRRPGTSRYTTQRREPDQVKILSGVFDGVTTGTSIGLLIENTDQRSQDYSAIKDVFRPGHADYTYEQKYGLRDYRGGGRSSARETAMRVAAGAIAKKYLAEKFGIEIRGCLTQMGDIPLEIKDWRQVELNPFFCPDADKLDALDELMRALKKEGDSIGAKVTVMASGVPAGLGEPVFDRLDADIAHALMSINAVKGVEIGEGFNVVALRGSQNRDEITAQGFQSNHAGGILGGISSGQHIVAHMALKPTSSITVPGRTINRAGEEVEMITKGRHDPCVGIRAVPIAEAMLAIVLMDHLLRHRAQNADVKTEIPRW.

Residues Arg-48 and Arg-54 each contribute to the NADP(+) site. FMN-binding positions include 125 to 127 (RSS), 238 to 239 (NA), Gly-278, 293 to 297 (KPTSS), and Arg-319.

It belongs to the chorismate synthase family. Homotetramer. FMNH2 is required as a cofactor.

It catalyses the reaction 5-O-(1-carboxyvinyl)-3-phosphoshikimate = chorismate + phosphate. It participates in metabolic intermediate biosynthesis; chorismate biosynthesis; chorismate from D-erythrose 4-phosphate and phosphoenolpyruvate: step 7/7. Its function is as follows. Catalyzes the anti-1,4-elimination of the C-3 phosphate and the C-6 proR hydrogen from 5-enolpyruvylshikimate-3-phosphate (EPSP) to yield chorismate, which is the branch point compound that serves as the starting substrate for the three terminal pathways of aromatic amino acid biosynthesis. This reaction introduces a second double bond into the aromatic ring system. The sequence is that of Chorismate synthase from Salmonella choleraesuis (strain SC-B67).